The primary structure comprises 219 residues: Transcriptional regulator AcuR (219 aa).

Residues 1-25 (MPLTDTPPSVPQKPRRGRPRGAPDA) form a disordered region. In terms of domain architecture, HTH tetR-type spans 26 to 86 (SLAHQSLIRA…ALIEAYDTYF (61 aa)). The H-T-H motif DNA-binding region spans 49-68 (GVDEILKAARVPKGSFYHYF).

Its function is as follows. A transcriptional repressor for its operon. Probably binds to 2 operator sequences in the promoter. The polypeptide is Transcriptional regulator AcuR (acuR) (Cereibacter sphaeroides (strain ATCC 17023 / DSM 158 / JCM 6121 / CCUG 31486 / LMG 2827 / NBRC 12203 / NCIMB 8253 / ATH 2.4.1.) (Rhodobacter sphaeroides)).